A 494-amino-acid chain; its full sequence is UDP-N-acetylmuramate--L-alanine ligase (494 aa).

Residue 140 to 146 (GTHGKTT) coordinates ATP.

This sequence belongs to the MurCDEF family.

Its subcellular location is the cytoplasm. It catalyses the reaction UDP-N-acetyl-alpha-D-muramate + L-alanine + ATP = UDP-N-acetyl-alpha-D-muramoyl-L-alanine + ADP + phosphate + H(+). It functions in the pathway cell wall biogenesis; peptidoglycan biosynthesis. Functionally, cell wall formation. The chain is UDP-N-acetylmuramate--L-alanine ligase from Nostoc sp. (strain PCC 7120 / SAG 25.82 / UTEX 2576).